The chain runs to 348 residues: Protein RecA (348 aa).

Position 65–72 (65–72 (GPESSGKT)) interacts with ATP. The tract at residues 328-348 (SKPQAETSARLATQEELADDY) is disordered.

It belongs to the RecA family.

It localises to the cytoplasm. Functionally, can catalyze the hydrolysis of ATP in the presence of single-stranded DNA, the ATP-dependent uptake of single-stranded DNA by duplex DNA, and the ATP-dependent hybridization of homologous single-stranded DNAs. It interacts with LexA causing its activation and leading to its autocatalytic cleavage. This is Protein RecA from Ectopseudomonas oleovorans (Pseudomonas oleovorans).